Here is a 429-residue protein sequence, read N- to C-terminus: Saccharopine dehydrogenase-like oxidoreductase (429 aa).

Ala2 is modified (N-acetylalanine). Phosphoserine is present on residues Ser209, Ser215, and Ser217.

It belongs to the saccharopine dehydrogenase family.

In Mus musculus (Mouse), this protein is Saccharopine dehydrogenase-like oxidoreductase (Sccpdh).